Consider the following 680-residue polypeptide: tRNA 5-methylaminomethyl-2-thiouridine biosynthesis bifunctional protein MnmC (680 aa).

The tract at residues 1-251 (MSQNHILPQN…KREMIAGTLT (251 aa)) is tRNA (mnm(5)s(2)U34)-methyltransferase. Residues 277–680 (IGGGVASAAL…RLLKGKPLDI (404 aa)) form an FAD-dependent cmnm(5)s(2)U34 oxidoreductase region.

In the N-terminal section; belongs to the methyltransferase superfamily. tRNA (mnm(5)s(2)U34)-methyltransferase family. It in the C-terminal section; belongs to the DAO family. FAD is required as a cofactor.

The protein localises to the cytoplasm. It catalyses the reaction 5-aminomethyl-2-thiouridine(34) in tRNA + S-adenosyl-L-methionine = 5-methylaminomethyl-2-thiouridine(34) in tRNA + S-adenosyl-L-homocysteine + H(+). In terms of biological role, catalyzes the last two steps in the biosynthesis of 5-methylaminomethyl-2-thiouridine (mnm(5)s(2)U) at the wobble position (U34) in tRNA. Catalyzes the FAD-dependent demodification of cmnm(5)s(2)U34 to nm(5)s(2)U34, followed by the transfer of a methyl group from S-adenosyl-L-methionine to nm(5)s(2)U34, to form mnm(5)s(2)U34. The protein is tRNA 5-methylaminomethyl-2-thiouridine biosynthesis bifunctional protein MnmC of Aliivibrio fischeri (strain ATCC 700601 / ES114) (Vibrio fischeri).